Here is a 373-residue protein sequence, read N- to C-terminus: Queuine tRNA-ribosyltransferase (373 aa).

Residue D89 is the Proton acceptor of the active site. Substrate is bound by residues 89–93, D143, Q192, and G220; that span reads DSGGF. An RNA binding region spans residues 251–257; that stretch reads GVGTPED. D270 serves as the catalytic Nucleophile. The segment at 275-279 is RNA binding; important for wobble base 34 recognition; that stretch reads TRNAR. Residues C308, C310, C313, and H339 each contribute to the Zn(2+) site.

This sequence belongs to the queuine tRNA-ribosyltransferase family. As to quaternary structure, homodimer. Within each dimer, one monomer is responsible for RNA recognition and catalysis, while the other monomer binds to the replacement base PreQ1. The cofactor is Zn(2+).

It catalyses the reaction 7-aminomethyl-7-carbaguanine + guanosine(34) in tRNA = 7-aminomethyl-7-carbaguanosine(34) in tRNA + guanine. It functions in the pathway tRNA modification; tRNA-queuosine biosynthesis. Catalyzes the base-exchange of a guanine (G) residue with the queuine precursor 7-aminomethyl-7-deazaguanine (PreQ1) at position 34 (anticodon wobble position) in tRNAs with GU(N) anticodons (tRNA-Asp, -Asn, -His and -Tyr). Catalysis occurs through a double-displacement mechanism. The nucleophile active site attacks the C1' of nucleotide 34 to detach the guanine base from the RNA, forming a covalent enzyme-RNA intermediate. The proton acceptor active site deprotonates the incoming PreQ1, allowing a nucleophilic attack on the C1' of the ribose to form the product. After dissociation, two additional enzymatic reactions on the tRNA convert PreQ1 to queuine (Q), resulting in the hypermodified nucleoside queuosine (7-(((4,5-cis-dihydroxy-2-cyclopenten-1-yl)amino)methyl)-7-deazaguanosine). This Aliarcobacter butzleri (strain RM4018) (Arcobacter butzleri) protein is Queuine tRNA-ribosyltransferase.